Reading from the N-terminus, the 372-residue chain is Cytochrome b (372 aa).

The next 4 membrane-spanning stretches (helical) occupy residues 25–45 (FGSMLLTCLALQTLTGFFLAI), 69–90 (WIMQNMHAIGASMFFICIYTHI), 105–125 (WLSGTALLIVLMATAFFGYVL), and 170–190 (FFALHFILPFLIISLSSIHIM). Heme b contacts are provided by His75 and His89. Heme b-binding residues include His174 and His188. His193 is a binding site for a ubiquinone. A run of 4 helical transmembrane segments spans residues 218 to 238 (YKDMFIITTMIATLFIIMSFM), 280 to 300 (LGGTMALLMSVLILTTMPFTH), 312 to 332 (ITQVVFWTFIATFITITWTAT), and 339 to 358 (FILISQMASSMYFLFFIIHP).

This sequence belongs to the cytochrome b family. In terms of assembly, the cytochrome bc1 complex contains 3 respiratory subunits (MT-CYB, CYC1 and UQCRFS1), 2 core proteins (UQCRC1 and UQCRC2) and probably 6 low-molecular weight proteins. It depends on heme b as a cofactor.

The protein localises to the mitochondrion inner membrane. Component of the ubiquinol-cytochrome c reductase complex (complex III or cytochrome b-c1 complex) that is part of the mitochondrial respiratory chain. The b-c1 complex mediates electron transfer from ubiquinol to cytochrome c. Contributes to the generation of a proton gradient across the mitochondrial membrane that is then used for ATP synthesis. The chain is Cytochrome b (MT-CYB) from Pseudechis australis (Mulga snake).